The following is a 188-amino-acid chain: Elongation factor P (188 aa).

K34 is subject to N6-(3,6-diaminohexanoyl)-5-hydroxylysine.

This sequence belongs to the elongation factor P family. Post-translationally, may be beta-lysylated on the epsilon-amino group of Lys-34 by the combined action of EpmA and EpmB, and then hydroxylated on the C5 position of the same residue by EpmC (if this protein is present). Lysylation is critical for the stimulatory effect of EF-P on peptide-bond formation. The lysylation moiety may extend toward the peptidyltransferase center and stabilize the terminal 3-CCA end of the tRNA. Hydroxylation of the C5 position on Lys-34 may allow additional potential stabilizing hydrogen-bond interactions with the P-tRNA.

It localises to the cytoplasm. It functions in the pathway protein biosynthesis; polypeptide chain elongation. Functionally, involved in peptide bond synthesis. Alleviates ribosome stalling that occurs when 3 or more consecutive Pro residues or the sequence PPG is present in a protein, possibly by augmenting the peptidyl transferase activity of the ribosome. Modification of Lys-34 is required for alleviation. In Actinobacillus succinogenes (strain ATCC 55618 / DSM 22257 / CCUG 43843 / 130Z), this protein is Elongation factor P.